The following is a 495-amino-acid chain: ATP synthase subunit beta, chloroplastic (495 aa).

172–179 is an ATP binding site; that stretch reads GGAGVGKT.

It belongs to the ATPase alpha/beta chains family. In terms of assembly, F-type ATPases have 2 components, CF(1) - the catalytic core - and CF(0) - the membrane proton channel. CF(1) has five subunits: alpha(3), beta(3), gamma(1), delta(1), epsilon(1). CF(0) has four main subunits: a(1), b(1), b'(1) and c(9-12).

It is found in the plastid. It localises to the chloroplast thylakoid membrane. The enzyme catalyses ATP + H2O + 4 H(+)(in) = ADP + phosphate + 5 H(+)(out). In terms of biological role, produces ATP from ADP in the presence of a proton gradient across the membrane. The catalytic sites are hosted primarily by the beta subunits. This is ATP synthase subunit beta, chloroplastic from Scilla siberica (Siberian squill).